The following is a 428-amino-acid chain: UPF0053 inner membrane protein YfjD (428 aa).

The Cytoplasmic segment spans residues 1 to 3 (MEH). The region spanning 2-192 (EHISTTTLII…SQISRRNQDM (191 aa)) is the CNNM transmembrane domain. A helical membrane pass occupies residues 4–24 (ISTTTLIIILIIMVVISAYFS). At 25 to 64 (GSETGMMTLNRYRLRHMAKQGNRSAKRVEKLLRKPDRLIS) the chain is on the periplasmic side. A helical membrane pass occupies residues 65 to 85 (LVLIGNNLVNILASALGTIVG). At 86 to 91 (MRLYGD) the chain is on the cytoplasmic side. Residues 92–112 (AGVAIATGVLTFVVLVFAEVL) form a helical membrane-spanning segment. Topologically, residues 113-129 (PKTIAALYPEKVAYPSS) are periplasmic. A helical transmembrane segment spans residues 130–150 (FLLAPLQILMMPLVWLLNAIT). Topologically, residues 151-428 (RMLMRMMGIK…VKPLRESVAE (278 aa)) are cytoplasmic. 2 consecutive CBS domains span residues 208–270 (MVPR…FTKE) and 272–332 (MLRA…FTTS).

It belongs to the UPF0053 family.

It is found in the cell inner membrane. In Escherichia coli (strain K12), this protein is UPF0053 inner membrane protein YfjD (yfjD).